The sequence spans 329 residues: Ketol-acid reductoisomerase (NADP(+)) (329 aa).

The KARI N-terminal Rossmann domain maps to 1–181; sequence MKVYYENDAD…GATRSGVLQT (181 aa). Residues 24–27, R47, and 82–85 contribute to the NADP(+) site; these read YGSQ and DQVQ. The active site involves H107. G133 lines the NADP(+) pocket. One can recognise a KARI C-terminal knotted domain in the interval 182 to 327; sequence TFREETETDL…GELRKMMSWL (146 aa). Residues D190, E194, E226, and E230 each contribute to the Mg(2+) site. Substrate is bound at residue S251.

It belongs to the ketol-acid reductoisomerase family. Mg(2+) serves as cofactor.

It catalyses the reaction (2R)-2,3-dihydroxy-3-methylbutanoate + NADP(+) = (2S)-2-acetolactate + NADPH + H(+). The catalysed reaction is (2R,3R)-2,3-dihydroxy-3-methylpentanoate + NADP(+) = (S)-2-ethyl-2-hydroxy-3-oxobutanoate + NADPH + H(+). It functions in the pathway amino-acid biosynthesis; L-isoleucine biosynthesis; L-isoleucine from 2-oxobutanoate: step 2/4. Its pathway is amino-acid biosynthesis; L-valine biosynthesis; L-valine from pyruvate: step 2/4. Functionally, involved in the biosynthesis of branched-chain amino acids (BCAA). Catalyzes an alkyl-migration followed by a ketol-acid reduction of (S)-2-acetolactate (S2AL) to yield (R)-2,3-dihydroxy-isovalerate. In the isomerase reaction, S2AL is rearranged via a Mg-dependent methyl migration to produce 3-hydroxy-3-methyl-2-ketobutyrate (HMKB). In the reductase reaction, this 2-ketoacid undergoes a metal-dependent reduction by NADPH to yield (R)-2,3-dihydroxy-isovalerate. This Maridesulfovibrio salexigens (strain ATCC 14822 / DSM 2638 / NCIMB 8403 / VKM B-1763) (Desulfovibrio salexigens) protein is Ketol-acid reductoisomerase (NADP(+)).